The primary structure comprises 511 residues: Lysine--tRNA ligase 2 (511 aa).

Over residues 1-11 (MTMEINNTDPS) the composition is skewed to polar residues. A disordered region spans residues 1–21 (MTMEINNTDPSENMPLPDDVD). Positions 421 and 428 each coordinate Mg(2+).

It belongs to the class-II aminoacyl-tRNA synthetase family. As to quaternary structure, homodimer. It depends on Mg(2+) as a cofactor.

It localises to the cytoplasm. The catalysed reaction is tRNA(Lys) + L-lysine + ATP = L-lysyl-tRNA(Lys) + AMP + diphosphate. This Methanosarcina acetivorans (strain ATCC 35395 / DSM 2834 / JCM 12185 / C2A) protein is Lysine--tRNA ligase 2.